We begin with the raw amino-acid sequence, 127 residues long: Fumarate reductase subunit C (127 aa).

Transmembrane regions (helical) follow at residues 30–50, 67–87, and 107–127; these read ATIL…GCLV, IVVV…QTFF, and IIVL…LVLV.

The protein belongs to the FrdC family. Part of an enzyme complex containing four subunits: a flavoprotein (FrdA), an iron-sulfur protein (FrdB), and two hydrophobic anchor proteins (FrdC and FrdD).

The protein resides in the cell inner membrane. Its function is as follows. Anchors the catalytic components of the fumarate reductase complex to the cell membrane, binds quinones. This Photobacterium profundum (strain SS9) protein is Fumarate reductase subunit C.